The chain runs to 618 residues: DNA mismatch repair protein MutL (618 aa).

Positions 366 to 381 are enriched in low complexity; sequence AEPTAAREPATPRYSG. The tract at residues 366 to 403 is disordered; it reads AEPTAAREPATPRYSGGASGGNGGRQSAGGWPHAQPGY. Residues 382 to 392 are compositionally biased toward gly residues; the sequence is GASGGNGGRQS.

The protein belongs to the DNA mismatch repair MutL/HexB family.

Functionally, this protein is involved in the repair of mismatches in DNA. It is required for dam-dependent methyl-directed DNA mismatch repair. May act as a 'molecular matchmaker', a protein that promotes the formation of a stable complex between two or more DNA-binding proteins in an ATP-dependent manner without itself being part of a final effector complex. The sequence is that of DNA mismatch repair protein MutL from Salmonella schwarzengrund (strain CVM19633).